Reading from the N-terminus, the 299-residue chain is Serpentine receptor class gamma-30 (299 aa).

7 helical membrane-spanning segments follow: residues 18–38 (GIQF…IKVL), 59–79 (ILSV…NYIP), 98–118 (ILFI…FMVV), 137–157 (IIPH…WTAF), 189–209 (IISS…MLCI), 223–243 (LTAS…MNIY), and 260–280 (ALTA…MLCL).

Belongs to the nematode receptor-like protein srg family.

It is found in the membrane. The sequence is that of Serpentine receptor class gamma-30 (srg-30) from Caenorhabditis elegans.